The chain runs to 395 residues: Glutamyl-tRNA reductase (395 aa).

Substrate is bound by residues 45–48, serine 87, 92–94, and glutamine 98; these read TCNR and EDQ. The active-site Nucleophile is the cysteine 46. 167 to 172 contributes to the NADP(+) binding site; the sequence is GAGEMG.

Belongs to the glutamyl-tRNA reductase family. As to quaternary structure, homodimer.

The enzyme catalyses (S)-4-amino-5-oxopentanoate + tRNA(Glu) + NADP(+) = L-glutamyl-tRNA(Glu) + NADPH + H(+). Its pathway is porphyrin-containing compound metabolism; protoporphyrin-IX biosynthesis; 5-aminolevulinate from L-glutamyl-tRNA(Glu): step 1/2. Catalyzes the NADPH-dependent reduction of glutamyl-tRNA(Glu) to glutamate 1-semialdehyde (GSA). This is Glutamyl-tRNA reductase from Methanosphaera stadtmanae (strain ATCC 43021 / DSM 3091 / JCM 11832 / MCB-3).